A 384-amino-acid chain; its full sequence is Sensor-like histidine kinase SenX3 (384 aa).

The region spanning 153–369 (NVSHELKTPV…TFTLSIPEYP (217 aa)) is the Histidine kinase domain. His-156 is modified (phosphohistidine; by autocatalysis). The segment at 360–384 (TFTLSIPEYPDPESHSDEREDQRER) is disordered. Over residues 371–384 (PESHSDEREDQRER) the composition is skewed to basic and acidic residues.

Autophosphorylated.

It localises to the cell membrane. It carries out the reaction ATP + protein L-histidine = ADP + protein N-phospho-L-histidine.. In terms of biological role, member of the two-component regulatory system SenX3/RegX3 involved in stress response. The system is involved in phosphate starvation response. Probably exhibits a dual role as a phosphatase or a phosphodonor for the response regulator RegX3, depending upon phosphate availability. When environmental phosphate is abundant, SenX3 is required to maintain RegX3 in an unphosphorylated state, where it is unable to bind target DNA. Under conditions of phosphate limitation, SenX3 autophosphorylates and then transfers the phosphate group to RegX3. Probably does not itself sense phosphate concentrations, which may be relayed to SenX3 by the PstSCAB phosphate transporter system. The chain is Sensor-like histidine kinase SenX3 from Mycolicibacterium smegmatis (strain ATCC 700084 / mc(2)155) (Mycobacterium smegmatis).